The primary structure comprises 561 residues: Membrane protein insertase YidC (561 aa).

6 helical membrane passes run 7–27 (ILIVALAIVSYVMVLKWNQDY), 342–362 (LELTVDYGFLWFIAQPIFWLL), 368–388 (LLGNWGWSIIVLTMLIKGLFF), 438–458 (LGGCLPILVQMPVFLALYWVL), 469–489 (WMLWITDLSIKDPFFILPIIM), and 516–536 (PIIFTFFFLWFPAGLVLYWVV).

The protein belongs to the OXA1/ALB3/YidC family. Type 1 subfamily. In terms of assembly, interacts with the Sec translocase complex via SecD. Specifically interacts with transmembrane segments of nascent integral membrane proteins during membrane integration.

Its subcellular location is the cell inner membrane. Required for the insertion and/or proper folding and/or complex formation of integral membrane proteins into the membrane. Involved in integration of membrane proteins that insert both dependently and independently of the Sec translocase complex, as well as at least some lipoproteins. Aids folding of multispanning membrane proteins. The sequence is that of Membrane protein insertase YidC from Pseudomonas entomophila (strain L48).